The chain runs to 165 residues: uncharacterized protein (165 aa).

The tract at residues 53–123 is disordered; it reads CSEKTGSAPN…PAPSSGRQGG (71 aa). Low complexity predominate over residues 58 to 71; the sequence is GSAPNPGSSAPAPA.

This is an uncharacterized protein from Treponema pallidum (strain Nichols).